The following is a 223-amino-acid chain: DNA mismatch repair protein MutH (223 aa).

This sequence belongs to the MutH family.

The protein localises to the cytoplasm. Functionally, sequence-specific endonuclease that cleaves unmethylated GATC sequences. It is involved in DNA mismatch repair. The protein is DNA mismatch repair protein MutH of Haemophilus influenzae (strain PittEE).